A 418-amino-acid chain; its full sequence is Glutamyl-tRNA(Gln) amidotransferase subunit D (418 aa).

Positions 74-405 (KNISILSTGG…KEAKELMSKN (332 aa)) constitute an Asparaginase/glutaminase domain. Active-site residues include Thr84, Thr160, Asp161, and Lys237.

Belongs to the asparaginase 1 family. GatD subfamily. In terms of assembly, heterodimer of GatD and GatE.

It carries out the reaction L-glutamyl-tRNA(Gln) + L-glutamine + ATP + H2O = L-glutaminyl-tRNA(Gln) + L-glutamate + ADP + phosphate + H(+). Functionally, allows the formation of correctly charged Gln-tRNA(Gln) through the transamidation of misacylated Glu-tRNA(Gln) in organisms which lack glutaminyl-tRNA synthetase. The reaction takes place in the presence of glutamine and ATP through an activated gamma-phospho-Glu-tRNA(Gln). The GatDE system is specific for glutamate and does not act on aspartate. The chain is Glutamyl-tRNA(Gln) amidotransferase subunit D from Methanococcus maripaludis (strain DSM 14266 / JCM 13030 / NBRC 101832 / S2 / LL).